A 511-amino-acid chain; its full sequence is Cobyric acid synthase (511 aa).

The GATase cobBQ-type domain occupies leucine 251–phenylalanine 443. Cysteine 332 serves as the catalytic Nucleophile. Residue histidine 435 is part of the active site.

Belongs to the CobB/CobQ family. CobQ subfamily.

Its pathway is cofactor biosynthesis; adenosylcobalamin biosynthesis. In terms of biological role, catalyzes amidations at positions B, D, E, and G on adenosylcobyrinic A,C-diamide. NH(2) groups are provided by glutamine, and one molecule of ATP is hydrogenolyzed for each amidation. The chain is Cobyric acid synthase from Listeria monocytogenes serotype 4b (strain F2365).